Consider the following 253-residue polypeptide: MSCTIEKALADAKALVERLRDHDDAAESLIEQTTALNKRVEAMKQYQEEIQELNEVARHRPRSTLVMGIQQENRQIRELQQENKELRTSLEEHQSALELIMSKYREQMFRLLMASKKDDPGIIMKLKEQHSKIDMVHRNKSEGFFLDASRHILEAPQHGLERRHLEANQNELQAHVDQITEMAAVMRKAIEIDEQQGCKEQERIFQLEQENKGLREILQITRESFLNLRKDDASESTSLSALVTNSDLSLRKS.

A coiled-coil region spans residues 5–104 (IEKALADAKA…SALELIMSKY (100 aa)). Residue Ser-141 is modified to Phosphoserine. The stretch at 160–223 (LERRHLEANQ…LREILQITRE (64 aa)) forms a coiled coil. Residues 231–253 (DDASESTSLSALVTNSDLSLRKS) form a disordered region. The span at 235–253 (ESTSLSALVTNSDLSLRKS) shows a compositional bias: polar residues.

It belongs to the SIKE family. As to expression, expressed in bone marrow, spleen and thymus.

Its subcellular location is the cytoplasm. May be involved in wound healing pathway. The chain is FGFR1 oncogene partner 2 (FGFR1OP2) from Homo sapiens (Human).